Reading from the N-terminus, the 136-residue chain is uncharacterized protein (136 aa).

The chain crosses the membrane as a helical span at residues 14 to 34 (ASVFAFFVLFLFCLKIILVLF).

It localises to the membrane. This is an uncharacterized protein from Mycoplasma genitalium (strain ATCC 33530 / DSM 19775 / NCTC 10195 / G37) (Mycoplasmoides genitalium).